A 242-amino-acid chain; its full sequence is LexA repressor (242 aa).

Positions 26–46 form a DNA-binding region, H-T-H motif; that stretch reads FEEMKAALNLKSKSGIHRLIS. Catalysis depends on for autocatalytic cleavage activity residues S163 and K201.

The protein belongs to the peptidase S24 family. Homodimer.

The catalysed reaction is Hydrolysis of Ala-|-Gly bond in repressor LexA.. In terms of biological role, represses a number of genes involved in the response to DNA damage (SOS response), including recA and lexA. In the presence of single-stranded DNA, RecA interacts with LexA causing an autocatalytic cleavage which disrupts the DNA-binding part of LexA, leading to derepression of the SOS regulon and eventually DNA repair. In Granulibacter bethesdensis (strain ATCC BAA-1260 / CGDNIH1), this protein is LexA repressor.